Consider the following 635-residue polypeptide: 3-dehydroshikimate dehydratase (635 aa).

Positions 134, 165, 191, and 239 each coordinate a divalent metal cation. VOC domains follow at residues 295–414 and 440–590; these read GVEF…LVEQ and RIDH…VYTE. Mg(2+) contacts are provided by H443, H521, and E599.

This sequence belongs to the bacterial two-domain DSD family. Homodimer. Co(2+) is required as a cofactor. Ni(2+) serves as cofactor. The cofactor is Mg(2+). It depends on Mn(2+) as a cofactor.

The enzyme catalyses 3-dehydroshikimate = 3,4-dihydroxybenzoate + H2O. The protein operates within aromatic compound metabolism; 3,4-dihydroxybenzoate biosynthesis. Catalyzes the conversion of 3-dehydroshikimate to protocatechuate (3,4-dihydroxybenzoate), a common intermediate of quinate and shikimate degradation pathways. This is 3-dehydroshikimate dehydratase from Pseudomonas putida (strain ATCC 47054 / DSM 6125 / CFBP 8728 / NCIMB 11950 / KT2440).